The sequence spans 471 residues: tRNA-2-methylthio-N(6)-dimethylallyladenosine synthase (471 aa).

Positions 31 to 149 constitute an MTTase N-terminal domain; it reads LYYHIETYGC…FPQLLWEALN (119 aa). [4Fe-4S] cluster contacts are provided by Cys-40, Cys-76, Cys-110, Cys-186, Cys-190, and Cys-193. Residues 172–402 enclose the Radical SAM core domain; that stretch reads RDSNLKAWVN…IELQNKISLE (231 aa). The TRAM domain occupies 405 to 468; the sequence is AELRGKIVEV…AWTMQGELVE (64 aa).

It belongs to the methylthiotransferase family. MiaB subfamily. As to quaternary structure, monomer. The cofactor is [4Fe-4S] cluster.

The protein localises to the cytoplasm. The enzyme catalyses N(6)-dimethylallyladenosine(37) in tRNA + (sulfur carrier)-SH + AH2 + 2 S-adenosyl-L-methionine = 2-methylsulfanyl-N(6)-dimethylallyladenosine(37) in tRNA + (sulfur carrier)-H + 5'-deoxyadenosine + L-methionine + A + S-adenosyl-L-homocysteine + 2 H(+). Catalyzes the methylthiolation of N6-(dimethylallyl)adenosine (i(6)A), leading to the formation of 2-methylthio-N6-(dimethylallyl)adenosine (ms(2)i(6)A) at position 37 in tRNAs that read codons beginning with uridine. The sequence is that of tRNA-2-methylthio-N(6)-dimethylallyladenosine synthase from Thermoanaerobacter pseudethanolicus (strain ATCC 33223 / 39E) (Clostridium thermohydrosulfuricum).